A 247-amino-acid chain; its full sequence is MILWSPSTCSFFWHWCLIAVSVLSSRSKESLRLSWSSDESSASSSSRICPLSNSKSVRLPQYPRGFGDVSGYRVSSSVSECYVQHGVLVAAWLVRGNFSDTAPRAYGTWGNERSATHFKVGAPQLENDGALRYETELPQVDARLSYVMLTVYPCSACNRSVLHCRPASRLPWLPLRVTPSDLERLFAERRYLTFLYVVLVQFVKHVALFSFGVQVACCVYLRWIRPWVRGRHRATGRTSREEEAKDD.

The N-terminal stretch at 1–27 (MILWSPSTCSFFWHWCLIAVSVLSSRS) is a signal peptide. Residues 28–192 (KESLRLSWSS…ERLFAERRYL (165 aa)) are Lumenal-facing. In terms of domain architecture, Ig-like H-type spans 72-168 (YRVSSSVSEC…RSVLHCRPAS (97 aa)). A disulfide bridge links Cys-81 with Cys-164. Residues Asn-97 and Asn-158 are each glycosylated (N-linked (GlcNAc...) asparagine; by host). The chain crosses the membrane as a helical span at residues 193-213 (TFLYVVLVQFVKHVALFSFGV). At 214 to 247 (QVACCVYLRWIRPWVRGRHRATGRTSREEEAKDD) the chain is on the cytoplasmic side.

It belongs to the cytomegalovirus US6 family.

Its subcellular location is the host endoplasmic reticulum membrane. It is found in the host cytoplasm. The protein localises to the host cytoskeleton. It localises to the host Golgi apparatus membrane. In terms of biological role, influences cell-to-cell spread of virus in polarized cells. Promotes dissemination of virus across cell-cell junctions of polarized epithelial cells, maybe through the association with the cytoskeletal matrix. This is Unique short US9 glycoprotein (US9) from Homo sapiens (Human).